The sequence spans 367 residues: MLNITSQVLAPALNGSVSQSSGCPNTEWSGWLNVIQAPFLWVLFVLATLENLFVLSVFCLHKSSCTVAEVYLGNLAAADLILACGLPFWAVTIANHFDWLFGEALCRVVNTMIYMNLYSSICFLMLVSIDRYLALVKTMSIGRMRRVRWAKLYSLVIWGCTLLLSSPMLVFRTMKDYRDEGYNVTACIIDYPSRSWEVFTNVLLNLVGFLLPLSVITFCTVQILQVLRNNEMQKFKEIQTERRATVLVLAVLLLFVVCWLPFQVSTFLDTLLKLGVLSSCWDEHVIDVITQVGSFMGYSNSCLNPLVYVIVGKRFRKKSREVYRAACPKAGCVLEPVQAESSMGTLRTSISVERQIHKLPEWTRSSQ.

At 1–36 the chain is on the extracellular side; sequence MLNITSQVLAPALNGSVSQSSGCPNTEWSGWLNVIQ. N-linked (GlcNAc...) asparagine glycosylation is found at Asn3 and Asn14. Residues 37-60 form a helical membrane-spanning segment; sequence APFLWVLFVLATLENLFVLSVFCL. Topologically, residues 61 to 69 are cytoplasmic; it reads HKSSCTVAE. The helical transmembrane segment at 70 to 94 threads the bilayer; sequence VYLGNLAAADLILACGLPFWAVTIA. The Extracellular portion of the chain corresponds to 95–107; it reads NHFDWLFGEALCR. Cysteines 106 and 187 form a disulfide. Residues 108-129 form a helical membrane-spanning segment; the sequence is VVNTMIYMNLYSSICFLMLVSI. The Cytoplasmic portion of the chain corresponds to 130–151; sequence DRYLALVKTMSIGRMRRVRWAK. Tyr132 carries the phosphotyrosine modification. Residues 152 to 174 form a helical membrane-spanning segment; sequence LYSLVIWGCTLLLSSPMLVFRTM. At 175–197 the chain is on the extracellular side; it reads KDYRDEGYNVTACIIDYPSRSWE. An N-linked (GlcNAc...) asparagine glycan is attached at Asn183. The helical transmembrane segment at 198 to 224 threads the bilayer; it reads VFTNVLLNLVGFLLPLSVITFCTVQIL. Over 225 to 243 the chain is Cytoplasmic; the sequence is QVLRNNEMQKFKEIQTERR. Residues 244-268 form a helical membrane-spanning segment; the sequence is ATVLVLAVLLLFVVCWLPFQVSTFL. Over 269–287 the chain is Extracellular; it reads DTLLKLGVLSSCWDEHVID. A helical transmembrane segment spans residues 288-311; sequence VITQVGSFMGYSNSCLNPLVYVIV. At 312 to 367 the chain is on the cytoplasmic side; sequence GKRFRKKSREVYRAACPKAGCVLEPVQAESSMGTLRTSISVERQIHKLPEWTRSSQ. Tyr323 is modified (phosphotyrosine). Residue Cys327 is the site of S-palmitoyl cysteine attachment. Ser342 is subject to Phosphoserine. Thr345 carries the post-translational modification Phosphothreonine. Phosphoserine; by GRK6 occurs at positions 349 and 351.

It belongs to the G-protein coupled receptor 1 family. Bradykinin receptor subfamily. BDKRB2 sub-subfamily. Forms a complex with PECAM1 and GNAQ. Interacts with PECAM1.

It localises to the cell membrane. Receptor for bradykinin. It is associated with G proteins that activate a phosphatidylinositol-calcium second messenger system. This is B2 bradykinin receptor (BDKRB2) from Oryctolagus cuniculus (Rabbit).